The chain runs to 285 residues: tRNA pseudouridine synthase A (285 aa).

D69 acts as the Nucleophile in catalysis. Y127 lines the substrate pocket.

It belongs to the tRNA pseudouridine synthase TruA family. As to quaternary structure, homodimer.

The catalysed reaction is uridine(38/39/40) in tRNA = pseudouridine(38/39/40) in tRNA. Its function is as follows. Formation of pseudouridine at positions 38, 39 and 40 in the anticodon stem and loop of transfer RNAs. This is tRNA pseudouridine synthase A from Pseudomonas aeruginosa (strain ATCC 15692 / DSM 22644 / CIP 104116 / JCM 14847 / LMG 12228 / 1C / PRS 101 / PAO1).